Consider the following 621-residue polypeptide: uncharacterized protein (621 aa).

Its subcellular location is the plastid. The protein localises to the chloroplast. This is an uncharacterized protein from Porphyra purpurea (Red seaweed).